The primary structure comprises 402 residues: tRNA pseudouridine synthase Pus10 (402 aa).

The 123-residue stretch at 37–159 (RLRGERLVEK…QIRVHVQINP (123 aa)) folds into the THUMP domain. D228 acts as the Nucleophile in catalysis. Residues Y296 and Y364 each coordinate substrate.

It belongs to the pseudouridine synthase Pus10 family.

It carries out the reaction uridine(54) in tRNA = pseudouridine(54) in tRNA. It catalyses the reaction uridine(55) in tRNA = pseudouridine(55) in tRNA. Its function is as follows. Responsible for synthesis of pseudouridine from uracil-54 and uracil-55 in the psi GC loop of transfer RNAs. This is tRNA pseudouridine synthase Pus10 from Methanothermobacter marburgensis (strain ATCC BAA-927 / DSM 2133 / JCM 14651 / NBRC 100331 / OCM 82 / Marburg) (Methanobacterium thermoautotrophicum).